The chain runs to 61 residues: Small ribosomal subunit protein uS14 (61 aa).

Positions 24, 27, 40, and 43 each coordinate Zn(2+).

This sequence belongs to the universal ribosomal protein uS14 family. Zinc-binding uS14 subfamily. In terms of assembly, part of the 30S ribosomal subunit. Contacts proteins S3 and S10. The cofactor is Zn(2+).

In terms of biological role, binds 16S rRNA, required for the assembly of 30S particles and may also be responsible for determining the conformation of the 16S rRNA at the A site. The polypeptide is Small ribosomal subunit protein uS14 (Symbiobacterium thermophilum (strain DSM 24528 / JCM 14929 / IAM 14863 / T)).